A 602-amino-acid polypeptide reads, in one-letter code: Proteasome-associated ATPase (602 aa).

Positions 13 to 89 (PDAAEVERLR…LREEVDRLGQ (77 aa)) form a coiled coil. Position 289–294 (289–294 (GCGKTL)) interacts with ATP. A docks into pockets in the proteasome alpha-ring region spans residues 601 to 602 (YL).

It belongs to the AAA ATPase family. In terms of assembly, homohexamer. Assembles into a hexameric ring structure that caps the 20S proteasome core. Strongly interacts with the prokaryotic ubiquitin-like protein Pup through a hydrophobic interface; the interacting region of ARC lies in its N-terminal coiled-coil domain. There is one Pup binding site per ARC hexamer ring. Upon ATP-binding, the C-terminus of ARC interacts with the alpha-rings of the proteasome core, possibly by binding to the intersubunit pockets.

The protein operates within protein degradation; proteasomal Pup-dependent pathway. Its function is as follows. ATPase which is responsible for recognizing, binding, unfolding and translocation of pupylated proteins into the bacterial 20S proteasome core particle. May be essential for opening the gate of the 20S proteasome via an interaction with its C-terminus, thereby allowing substrate entry and access to the site of proteolysis. Thus, the C-termini of the proteasomal ATPase may function like a 'key in a lock' to induce gate opening and therefore regulate proteolysis. The polypeptide is Proteasome-associated ATPase (Mycobacteroides abscessus (strain ATCC 19977 / DSM 44196 / CCUG 20993 / CIP 104536 / JCM 13569 / NCTC 13031 / TMC 1543 / L948) (Mycobacterium abscessus)).